A 279-amino-acid chain; its full sequence is 3-methyl-2-oxobutanoate hydroxymethyltransferase (279 aa).

Residues Asp-44 and Asp-83 each contribute to the Mg(2+) site. Residues 44-45 (DS), Asp-83, and Lys-112 contribute to the 3-methyl-2-oxobutanoate site. Residue Glu-114 coordinates Mg(2+). Glu-180 acts as the Proton acceptor in catalysis.

The protein belongs to the PanB family. In terms of assembly, homodecamer; pentamer of dimers. Requires Mg(2+) as cofactor.

Its subcellular location is the cytoplasm. The enzyme catalyses 3-methyl-2-oxobutanoate + (6R)-5,10-methylene-5,6,7,8-tetrahydrofolate + H2O = 2-dehydropantoate + (6S)-5,6,7,8-tetrahydrofolate. The protein operates within cofactor biosynthesis; (R)-pantothenate biosynthesis; (R)-pantoate from 3-methyl-2-oxobutanoate: step 1/2. In terms of biological role, catalyzes the reversible reaction in which hydroxymethyl group from 5,10-methylenetetrahydrofolate is transferred onto alpha-ketoisovalerate to form ketopantoate. This chain is 3-methyl-2-oxobutanoate hydroxymethyltransferase, found in Chloroflexus aggregans (strain MD-66 / DSM 9485).